We begin with the raw amino-acid sequence, 90 residues long: MGNGLSKALIVLIRIYQRWISPLFLPTCRYTPSCSAYAVEAIARYGAVKGTYLAIRRILRCHPFAVGGYDPVPTTCPDPCNESSPPNPPC.

It belongs to the UPF0161 family.

It is found in the cell inner membrane. In terms of biological role, could be involved in insertion of integral membrane proteins into the membrane. This is Putative membrane protein insertion efficiency factor from Thermosynechococcus vestitus (strain NIES-2133 / IAM M-273 / BP-1).